Reading from the N-terminus, the 655-residue chain is p-hydroxybenzoic acid efflux pump subunit AaeB (655 aa).

The next 11 membrane-spanning stretches (helical) occupy residues 13 to 33, 38 to 58, 69 to 89, 93 to 113, 121 to 141, 152 to 172, 370 to 390, 407 to 427, 431 to 451, 459 to 479, and 482 to 502; these read FAVK…HFQL, WAVL…GGEP, LRII…IAMI, LLMI…SSLV, WGLA…EPLL, EIVI…PRSI, LFWL…IAVV, FIYG…VIIP, QSML…GIEV, MGAL…TFHF, and FLDS…VILL.

The protein belongs to the aromatic acid exporter ArAE (TC 2.A.85) family.

It localises to the cell inner membrane. In terms of biological role, forms an efflux pump with AaeA. Could function as a metabolic relief valve, allowing to eliminate certain compounds when they accumulate to high levels in the cell. This Shigella sonnei (strain Ss046) protein is p-hydroxybenzoic acid efflux pump subunit AaeB.